Reading from the N-terminus, the 684-residue chain is Probable pectin methyltransferase QUA2 (684 aa).

The tract at residues 1 to 35 (MSMPLQRGISGVRVSDSSDDLRDSQMKDKTERARS) is disordered. Over 1-86 (MSMPLQRGIS…RHRLMLLFLK (86 aa)) the chain is Cytoplasmic. Residues 19–35 (DDLRDSQMKDKTERARS) are compositionally biased toward basic and acidic residues. Residues 87–107 (ISLVLIVVIALAGSFWWTISI) form a helical; Signal-anchor for type II membrane protein membrane-spanning segment. Topologically, residues 108–684 (STSSRGHVYH…QKPFTKRQSI (577 aa)) are lumenal. N-linked (GlcNAc...) asparagine glycosylation is found at N161 and N476.

This sequence belongs to the methyltransferase superfamily. As to expression, ubiquitous.

It localises to the golgi apparatus membrane. It functions in the pathway glycan metabolism; pectin biosynthesis. Functionally, may be involved in the synthesis of homogalacturonan. Required for normal cell adhesion and plant development. The chain is Probable pectin methyltransferase QUA2 (QUA2) from Arabidopsis thaliana (Mouse-ear cress).